The sequence spans 31 residues: Photosystem II reaction center protein T (31 aa).

A helical membrane pass occupies residues 3-23 (ALVYTFLLISTLGIIFFGIFF).

It belongs to the PsbT family. In terms of assembly, PSII is composed of 1 copy each of membrane proteins PsbA, PsbB, PsbC, PsbD, PsbE, PsbF, PsbH, PsbI, PsbJ, PsbK, PsbL, PsbM, PsbT, PsbY, PsbZ, Psb30/Ycf12, at least 3 peripheral proteins of the oxygen-evolving complex and a large number of cofactors. It forms dimeric complexes.

Its subcellular location is the plastid. It is found in the chloroplast thylakoid membrane. In terms of biological role, found at the monomer-monomer interface of the photosystem II (PS II) dimer, plays a role in assembly and dimerization of PSII. PSII is a light-driven water plastoquinone oxidoreductase, using light energy to abstract electrons from H(2)O, generating a proton gradient subsequently used for ATP formation. This is Photosystem II reaction center protein T from Nephroselmis olivacea (Green alga).